A 675-amino-acid chain; its full sequence is MTTSYMNGHVTEESDSGIKNLDLASPEEYPKHREMAVDCPGDLGTRMMPVRRSAQLERIRQQQEDMRRRREEEGKKQELDLNSSMRLKKLAQIPPKTGIDNPIFDTEEGIVLESPHYAVNILDVEDLFSSLKHIQHTLVDSQSQEDISLLLQLVQNRDFQNAFKIHNAVTVHMSKASPPFPLIANVQDLVQEVQTVLKPVHQKEGQELTALLNAPHIQALLLAHDKVAEQEMQLEPITDERVYESIGHYGGETVKIVRIEKARDIPLGATVRNEMDSVIISRIVKGGAAEKSGLLHEGDEVLEINGIEIRGKDVNEVFDLLSDMHGTLTFVLIPSQQIKPPPAKETVIHVKAHFDYDPSDDPYVPCRELGLSFQKGDILHVISQEDPNWWQAYREGDEDNQPLAGLVPGKSFQQQREAMKQTIEEDKEPEKSGKLWCAKKNKKKRKKVLYNANKNDDYDNEEILTYEEMSLYHQPANRKRPIILIGPQNCGQNELRQRLMNKEKDRFASAVPHTTRNRRDHEVAGRDYHFVSRQAFEADIAAGKFIEHGEFEKNLYGTSIDSVRQVINSGKICLLSLRTQSLKTLRNSDLKPYIIFIAPPSQERLRALLAKEGKNPKPEELREIIEKTREMEQNNGHYFDTAIVNSDLDKAYQELLRLINKLDTEPQWVPSTWLR.

Residues 1-345 (MTTSYMNGHV…QQIKPPPAKE (345 aa)) form a required for the correct localization of PALS1 and PATJ at cell-cell contacts and the normal formation of tight junctions and adherens junctions region. 2 positions are modified to phosphoserine: Ser14 and Ser25. Residues 21-140 (LDLASPEEYP…LKHIQHTLVD (120 aa)) form an interaction with PARD6B region. Residues 51–79 (RRSAQLERIRQQQEDMRRRREEEGKKQEL) are disordered. A compositionally biased stretch (basic and acidic residues) spans 54–79 (AQLERIRQQQEDMRRRREEEGKKQEL). Ser83 and Ser84 each carry phosphoserine. L27 domains are found at residues 120 to 177 (NILD…SKAS) and 179 to 235 (PFPL…MQLE). The tract at residues 181–243 (PLIANVQDLV…LEPITDERVY (63 aa)) is interaction with LIN7C. The PDZ domain maps to 256 to 336 (IVRIEKARDI…TLTFVLIPSQ (81 aa)). The region spanning 345-417 (ETVIHVKAHF…PGKSFQQQRE (73 aa)) is the SH3 domain. The Guanylate kinase-like domain maps to 479-660 (KRPIILIGPQ…AYQELLRLIN (182 aa)). 486–493 (GPQNCGQN) lines the ATP pocket.

Belongs to the MAGUK family. As to quaternary structure, heterodimer with MPP1. Forms a heterotrimeric complex composed of PALS1, LIN7B and PATJ; the N-terminal L27 domain of PALS1 interacts with the L27 domain of PATJ and the C-terminal L27 domain of PALS1 interacts with the L27 domain of LIN7B. Component of a complex composed of PALS1, CRB1 and MPP4. Component of a complex whose core is composed of ARHGAP17, AMOT, PALS1, PATJ and PARD3/PAR3. Component of a complex composed of PALS1, CRB1 and EPB41L5. Within the complex, interacts (via HOOK domain) with EPB41L5 (via FERM domain), and interacts with CRB1 (via intracellular domain). Component of a complex composed of PALS1, MPP3 and CRB1; PALS1 acts as a bridging protein between MPP3 (via guanylate kinase-like domain) and CRB1. Component of a complex composed of CRB3, PALS1 and PATJ. As part of the Crumbs complex; interacts with WWP1, the interaction is enhanced by AMOTL2 and facilitates WWP1 localization to the plasma membrane. The Crumbs complex promotes monoubiquitination of AMOTL2 by WWP1, which activates the Hippo signaling pathway. Interacts (via PDZ domain) with PATJ (via N-terminus). Interacts with EZR. Interacts (via PDZ domain) with CRB1 (via C-terminal ERLI motif). While the PDZ domain is sufficient for interaction with CRB1, the adjacent SH3 and guanylate kinase-like domains are likely to contribute to a high affinity interaction. Interacts with WWTR1/TAZ (via WW domain). Interacts with MPP7. Interacts (via PDZ domain) with CRB3 (via C-terminus). Interacts with LIN7C. Interacts with MPDZ. Interacts with PARD6B. Interacts with SC6A1. Interacts with CDH5; the interaction promotes PALS1 localization to cell junctions and is required for CDH5-mediated vascular lumen formation and endothelial cell. Interacts with NPHP1 (via coiled coil and SH3 domains). Interacts with NPHP4. Interacts with CRB2. Expressed in the retinal pigment epithelium (at protein level). Expressed in the vascular plexus of the retina (at protein level). In the brain, expressed in the dentate gyrus of hippocampus, striatum and cerebellum (at protein level). Expressed in the sciatic nerve (at protein level). Expressed in the kidney nephron (at protein level). Expressed in the lung, and heart. Expressed in placenta, brain, skeletal muscles, pancreas and liver.

Its subcellular location is the golgi apparatus. The protein resides in the cell membrane. The protein localises to the endomembrane system. It localises to the cell junction. It is found in the tight junction. Its subcellular location is the adherens junction. The protein resides in the cell projection. The protein localises to the axon. It localises to the perikaryon. It is found in the apical cell membrane. Plays a role in tight junction biogenesis and in the establishment of cell polarity in epithelial cells. Also involved in adherens junction biogenesis by ensuring correct localization of the exocyst complex protein EXOC4/SEC8 which allows trafficking of adherens junction structural component CDH1 to the cell surface. Plays a role through its interaction with CDH5 in vascular lumen formation and endothelial membrane polarity. Required during embryonic and postnatal retinal development. Required for the maintenance of cerebellar progenitor cells in an undifferentiated proliferative state, preventing premature differentiation, and is required for cerebellar histogenesis, fissure formation, cerebellar layer organization and cortical development. Plays a role in neuronal progenitor cell survival, potentially via promotion of mTOR signaling. Plays a role in the radial and longitudinal extension of the myelin sheath in Schwann cells. May modulate SC6A1/GAT1-mediated GABA uptake by stabilizing the transporter. May play a role in the T-cell receptor-mediated activation of NF-kappa-B. Required for localization of EZR to the apical membrane of parietal cells and may play a role in the dynamic remodeling of the apical cytoskeleton. Required for the normal polarized localization of the vesicular marker STX4. Required for the correct trafficking of the myelin proteins PMP22 and MAG. Involved in promoting phosphorylation and cytoplasmic retention of transcriptional coactivators YAP1 and WWTR1/TAZ which leads to suppression of TGFB1-dependent transcription of target genes such as CCN2/CTGF, SERPINE1/PAI1, SNAI1/SNAIL1 and SMAD7. This is Protein PALS1 from Mus musculus (Mouse).